We begin with the raw amino-acid sequence, 270 residues long: NAD(P)H-hydrate epimerase (270 aa).

The 210-residue stretch at 25 to 234 (FQQLMDLMQN…DLLAPEAIYQ (210 aa)) folds into the YjeF N-terminal domain. 73–77 (DNGGQ) lines the (6S)-NADPHX pocket. Residues Asn-74 and Asp-144 each contribute to the K(+) site. (6S)-NADPHX is bound by residues 148–154 (GVGLYGH) and Glu-177. Thr-180 provides a ligand contact to K(+).

This sequence belongs to the NnrE/AIBP family. Requires K(+) as cofactor.

It catalyses the reaction (6R)-NADHX = (6S)-NADHX. It carries out the reaction (6R)-NADPHX = (6S)-NADPHX. Catalyzes the epimerization of the S- and R-forms of NAD(P)HX, a damaged form of NAD(P)H that is a result of enzymatic or heat-dependent hydration. This is a prerequisite for the S-specific NAD(P)H-hydrate dehydratase to allow the repair of both epimers of NAD(P)HX. In Legionella pneumophila serogroup 1 (strain 2300/99 Alcoy), this protein is NAD(P)H-hydrate epimerase.